A 256-amino-acid polypeptide reads, in one-letter code: MEDTFKIGGRELTSRLFLGTGKFSSNRLIPEAVRASGAQVVTVALRRIDLEYEEENIAAYVPKDCILMPNTSGARNAQEAVRIARLARAAGCGNWVKIEVITDNRYLLPDNYETIKATEILAAEGFVVLPYMSPDLMVAKKLAEAGAAAVMPLGAPIGSNRGLRTKELVRILIDEIPLPIIVDAGLGRPSEAAEAMEMGAAAVLVNTAIATAGDPVAMARAFGLAVKAGRLAYLAGPGETQEYARASSPLTGFLRD.

Lysine 97 serves as the catalytic Schiff-base intermediate with DXP. Residues glycine 158, 184–185 (AG), and 206–207 (NT) each bind 1-deoxy-D-xylulose 5-phosphate.

It belongs to the ThiG family. In terms of assembly, homotetramer. Forms heterodimers with either ThiH or ThiS.

It is found in the cytoplasm. The enzyme catalyses [ThiS sulfur-carrier protein]-C-terminal-Gly-aminoethanethioate + 2-iminoacetate + 1-deoxy-D-xylulose 5-phosphate = [ThiS sulfur-carrier protein]-C-terminal Gly-Gly + 2-[(2R,5Z)-2-carboxy-4-methylthiazol-5(2H)-ylidene]ethyl phosphate + 2 H2O + H(+). It participates in cofactor biosynthesis; thiamine diphosphate biosynthesis. Functionally, catalyzes the rearrangement of 1-deoxy-D-xylulose 5-phosphate (DXP) to produce the thiazole phosphate moiety of thiamine. Sulfur is provided by the thiocarboxylate moiety of the carrier protein ThiS. In vitro, sulfur can be provided by H(2)S. The chain is Thiazole synthase from Pelotomaculum thermopropionicum (strain DSM 13744 / JCM 10971 / SI).